The chain runs to 339 residues: Serine racemase (339 aa).

ATP contacts are provided by Ser-43 and Lys-63. Lys-68 functions as the Proton acceptor in the catalytic mechanism. Lys-68 bears the N6-(pyridoxal phosphate)lysine mark. Thr-90 contacts Ca(2+). Ser-93 acts as the Proton acceptor in catalysis. Pyridoxal 5'-phosphate is bound at residue Asn-95. Cys-122 bears the S-nitrosocysteine mark. Residue Tyr-130 participates in ATP binding. Position 187 (Asp-187) interacts with Mg(2+). Residues Gly-195, Gly-196, and Gly-197 each contribute to the pyridoxal 5'-phosphate site. Ca(2+)-binding residues include Glu-219, Ala-223, and Asp-225. Glu-219, Ala-223, and Asp-225 together coordinate Mg(2+). 3 residues coordinate Mn(2+): Glu-219, Ala-223, and Asp-225. Lys-287 is an ATP binding site. Ser-323 serves as a coordination point for pyridoxal 5'-phosphate. Asn-326 contacts ATP.

It belongs to the serine/threonine dehydratase family. Requires Mg(2+) as cofactor. The cofactor is Mn(2+). Ca(2+) serves as cofactor. It depends on pyridoxal 5'-phosphate as a cofactor.

It catalyses the reaction L-serine = D-serine. The catalysed reaction is L-serine = pyruvate + NH4(+). The enzyme catalyses D-serine = pyruvate + NH4(+). Functionally, catalyzes the synthesis of D-serine from L-serine. Has dehydratase activity towards both L-serine and D-serine. In Oryza sativa subsp. indica (Rice), this protein is Serine racemase.